Here is a 257-residue protein sequence, read N- to C-terminus: Protein YIPF5 (257 aa).

The Cytoplasmic portion of the chain corresponds to Met-1–Glu-124. The interval Pro-75 to Lys-106 is interaction with Sec23. The chain crosses the membrane as a helical span at residues Thr-125–Gly-145. Position 146 (Lys-146) is a topological domain, lumenal. The chain crosses the membrane as a helical span at residues Ile-147–Leu-167. Topologically, residues Asn-168–Thr-173 are cytoplasmic. A helical transmembrane segment spans residues Gly-174–Leu-194. Over Ser-195–Ser-196 the chain is Lumenal. Residues Phe-197–Gly-217 traverse the membrane as a helical segment. The Cytoplasmic segment spans residues Trp-218 to Gln-236. Residues Gln-237–Phe-257 form a helical membrane-spanning segment.

This sequence belongs to the YIP1 family. As to quaternary structure, interacts with the COPII coat components Sec23 (SEC23A and/or SEC23B) and Sec24 (SEC24A and/or SEC24B). Interacts with YIF1A. May interact with RAB1A. Interacts with YIPF3 and YIPF4.

It is found in the endoplasmic reticulum membrane. It localises to the golgi apparatus. Its subcellular location is the cis-Golgi network membrane. The protein resides in the cytoplasmic vesicle. The protein localises to the COPII-coated vesicle. In terms of biological role, plays a role in transport between endoplasmic reticulum and Golgi. In pancreatic beta cells, required to transport proinsulin from endoplasmic reticulum into the Golgi. This is Protein YIPF5 (YIPF5) from Macaca fascicularis (Crab-eating macaque).